The chain runs to 460 residues: Diguanylate cyclase DosC (460 aa).

H98 contacts heme. Positions 325–458 (TPLSVLIIDV…GRNRVELWKA (134 aa)) constitute a GGDEF domain. D333 is a binding site for Mg(2+). N341 and D350 together coordinate substrate. D376 lines the Mg(2+) pocket. Residue D376 is the Proton acceptor of the active site.

The cofactor is heme. Mg(2+) is required as a cofactor.

The enzyme catalyses 2 GTP = 3',3'-c-di-GMP + 2 diphosphate. It functions in the pathway purine metabolism; 3',5'-cyclic di-GMP biosynthesis. Globin-coupled heme-based oxygen sensor protein displaying diguanylate cyclase (DGC) activity in response to oxygen availability. Thus, catalyzes the synthesis of cyclic diguanylate (c-di-GMP) via the condensation of 2 GTP molecules. Cyclic-di-GMP is a second messenger which controls cell surface-associated traits in bacteria. This Shigella sonnei (strain Ss046) protein is Diguanylate cyclase DosC (dosC).